The following is a 185-amino-acid chain: Large ribosomal subunit protein uL5 (185 aa).

It belongs to the universal ribosomal protein uL5 family. In terms of assembly, part of the 50S ribosomal subunit; part of the 5S rRNA/L5/L18/L25 subcomplex. Contacts the 5S rRNA and the P site tRNA. Forms a bridge to the 30S subunit in the 70S ribosome.

In terms of biological role, this is one of the proteins that bind and probably mediate the attachment of the 5S RNA into the large ribosomal subunit, where it forms part of the central protuberance. In the 70S ribosome it contacts protein S13 of the 30S subunit (bridge B1b), connecting the 2 subunits; this bridge is implicated in subunit movement. Contacts the P site tRNA; the 5S rRNA and some of its associated proteins might help stabilize positioning of ribosome-bound tRNAs. This Nitrobacter winogradskyi (strain ATCC 25391 / DSM 10237 / CIP 104748 / NCIMB 11846 / Nb-255) protein is Large ribosomal subunit protein uL5.